The following is a 266-amino-acid chain: MTMNTPRPRSQPPPPHPPLFKPTTPPPPPLLSTSTSTSPPHDFSFAHYLSSPPPSVQRRGRADMSRTPPLGRVGSDLSHNNYSSKANQHRQTGSSSSSSSKEKDREYKAKSKASSPFFSGLGGSWRSGLSRDEEVKRKAKAKTRGLDVGQWVKKYMASMVEHLLASFSRHGGGEREKREQQRRRPHSFSAHGPSALREQRERWRRRRGQLSSAPASLRASPVNSGHLSVGGSVKVSTSSEESTMEELQSAIEAAIAHCKNSITVAK.

Disordered regions lie at residues 1 to 144 and 167 to 242; these read MTMN…AKTR and FSRH…SEES. Residues 9–30 show a composition bias toward pro residues; that stretch reads RSQPPPPHPPLFKPTTPPPPPL. Residues 31–40 show a composition bias toward low complexity; it reads LSTSTSTSPP. Positions 77-93 are enriched in polar residues; the sequence is LSHNNYSSKANQHRQTG. A compositionally biased stretch (basic and acidic residues) spans 100–109; that stretch reads SKEKDREYKA. Composition is skewed to low complexity over residues 210–221 and 229–241; these read LSSAPASLRASP and VGGS…SSEE.

In terms of biological role, negative regulator of brassinosteroid signaling. The polypeptide is Probable BRI1 kinase inhibitor 1 (BKI1) (Oryza sativa subsp. indica (Rice)).